The sequence spans 470 residues: Ribulose bisphosphate carboxylase large chain (470 aa).

N115 and T165 together coordinate substrate. The active-site Proton acceptor is K167. K169 contributes to the substrate binding site. Residues K193, D195, and E196 each coordinate Mg(2+). K193 carries the post-translational modification N6-carboxylysine. The active-site Proton acceptor is the H286. Residues R287, H319, and S371 each coordinate substrate.

The protein belongs to the RuBisCO large chain family. Type I subfamily. Heterohexadecamer of 8 large chains and 8 small chains. It depends on Mg(2+) as a cofactor.

The protein resides in the carboxysome. The enzyme catalyses 2 (2R)-3-phosphoglycerate + 2 H(+) = D-ribulose 1,5-bisphosphate + CO2 + H2O. The catalysed reaction is D-ribulose 1,5-bisphosphate + O2 = 2-phosphoglycolate + (2R)-3-phosphoglycerate + 2 H(+). In terms of biological role, ruBisCO catalyzes two reactions: the carboxylation of D-ribulose 1,5-bisphosphate, the primary event in carbon dioxide fixation, as well as the oxidative fragmentation of the pentose substrate in the photorespiration process. Both reactions occur simultaneously and in competition at the same active site. The protein is Ribulose bisphosphate carboxylase large chain of Prochlorococcus marinus (strain NATL1A).